We begin with the raw amino-acid sequence, 248 residues long: Homeobox protein BarH-like 1 (248 aa).

Positions 135 to 194 (GRRSRTVFTELQLMGLEKRFEKQKYLSTPDRIDLAESLGLSQLQVKTWYQNRRMKWKKIV) form a DNA-binding region, homeobox. Residues 197–248 (GGGLESPTKPKGRPKKNSIPTSEQLSEQERTREADRLSDGGASSLSDANQEE) are disordered. The segment covering 223-234 (EQERTREADRLS) has biased composition (basic and acidic residues). Residues 237–248 (GASSLSDANQEE) show a composition bias toward polar residues.

The protein belongs to the BAR homeobox family.

The protein resides in the nucleus. Functionally, transcription factor, is involved in craniofacial development, and in stomach organogenesis. The chain is Homeobox protein BarH-like 1 (barx1) from Danio rerio (Zebrafish).